The chain runs to 568 residues: Probable inactive 1-aminocyclopropane-1-carboxylate synthase-like protein 2 (568 aa).

The segment at 1–21 is disordered; the sequence is MSHRSDTLPVPSGQRRGRVPR. At Lys395 the chain carries N6-(pyridoxal phosphate)lysine.

This sequence belongs to the class-I pyridoxal-phosphate-dependent aminotransferase family.

This is Probable inactive 1-aminocyclopropane-1-carboxylate synthase-like protein 2 (ACCSL) from Homo sapiens (Human).